A 352-amino-acid chain; its full sequence is Type II restriction enzyme HaeII (352 aa).

The enzyme catalyses Endonucleolytic cleavage of DNA to give specific double-stranded fragments with terminal 5'-phosphates.. Functionally, a P subtype restriction enzyme that recognizes the double-stranded sequence 5'-RGCGCY-3' and cleaves after C-5. The chain is Type II restriction enzyme HaeII (haeIIR) from Haemophilus aegyptius.